The primary structure comprises 297 residues: tRNA pseudouridine synthase B (297 aa).

Residue Asp39 is the Nucleophile of the active site.

It belongs to the pseudouridine synthase TruB family. Type 1 subfamily.

The catalysed reaction is uridine(55) in tRNA = pseudouridine(55) in tRNA. In terms of biological role, responsible for synthesis of pseudouridine from uracil-55 in the psi GC loop of transfer RNAs. The polypeptide is tRNA pseudouridine synthase B (Lactobacillus acidophilus (strain ATCC 700396 / NCK56 / N2 / NCFM)).